The following is a 229-amino-acid chain: Large ribosomal subunit protein uL1 (229 aa).

The protein belongs to the universal ribosomal protein uL1 family. In terms of assembly, part of the 50S ribosomal subunit.

Its function is as follows. Binds directly to 23S rRNA. The L1 stalk is quite mobile in the ribosome, and is involved in E site tRNA release. In terms of biological role, protein L1 is also a translational repressor protein, it controls the translation of the L11 operon by binding to its mRNA. This chain is Large ribosomal subunit protein uL1, found in Streptococcus gordonii (strain Challis / ATCC 35105 / BCRC 15272 / CH1 / DL1 / V288).